Consider the following 254-residue polypeptide: MDYLLISSETDPASQNLKKHVENYGYSVFNIEKKSTQTNYSEFPQSEMYIFLSKHASESKKPTLTVHTPGNLTDDNSHGGNPEEISPCNPVFNTLMLQNMNKYNEMEEYKELGFDVSFEVLHHGPTDLKAPSAFVEIGSSEEQWQIDDAAEIITNSLIDTLNSIQNSEYDEKEKIIGIGGGHYSPKFTKLALREEYYVGYLTPKHAKLSENILNQLTSKQEFDFIGIDWKGLYGEDKRKYVEFFDENDISWQRV.

Residues 61–82 (KPTLTVHTPGNLTDDNSHGGNP) are disordered. Over residues 65–74 (TVHTPGNLTD) the composition is skewed to polar residues.

This sequence belongs to the DtdA deacylase family. In terms of assembly, monomer. Zn(2+) is required as a cofactor.

The catalysed reaction is a D-aminoacyl-tRNA + H2O = a tRNA + a D-alpha-amino acid + H(+). It catalyses the reaction glycyl-tRNA(Ala) + H2O = tRNA(Ala) + glycine + H(+). D-aminoacyl-tRNA deacylase with broad substrate specificity. By recycling D-aminoacyl-tRNA to D-amino acids and free tRNA molecules, this enzyme counteracts the toxicity associated with the formation of D-aminoacyl-tRNA entities in vivo. This chain is D-aminoacyl-tRNA deacylase, found in Methanococcus maripaludis (strain DSM 14266 / JCM 13030 / NBRC 101832 / S2 / LL).